A 439-amino-acid chain; its full sequence is Mitochondrial distribution and morphology protein 12 (439 aa).

The SMP-LTD domain occupies 1–439 (MSIDVNWRSA…VYPSFWTFLI (439 aa)). Residues 70-85 (YEEDDDDHTSDASEEL) are compositionally biased toward acidic residues. Disordered regions lie at residues 70–102 (YEEDDDDHTSDASEELGSEHSSQWNRTHPELNE), 184–274 (SGWS…PPRM), and 353–386 (GSEQQQQQESAGDDHRPQSRPDSSASASQKRHGG). Residues 197–212 (GRSERHAGMKHQRAEP) show a composition bias toward basic and acidic residues. A compositionally biased stretch (polar residues) spans 215–230 (DTSNSTSRPSTANTLP). A compositionally biased stretch (low complexity) spans 231-240 (SHPSSSSKNS). Positions 247–261 (RNDHPSLHAGEHIED) are enriched in basic and acidic residues.

This sequence belongs to the MDM12 family. In terms of assembly, component of the ER-mitochondria encounter structure (ERMES) or MDM complex, composed of mmm1, mdm10, mdm12 and mdm34. A mmm1 homodimer associates with one molecule of mdm12 on each side in a pairwise head-to-tail manner, and the SMP-LTD domains of mmm1 and mdm12 generate a continuous hydrophobic tunnel for phospholipid trafficking.

The protein localises to the mitochondrion outer membrane. It is found in the endoplasmic reticulum membrane. Its function is as follows. Component of the ERMES/MDM complex, which serves as a molecular tether to connect the endoplasmic reticulum (ER) and mitochondria. Components of this complex are involved in the control of mitochondrial shape and protein biogenesis, and function in nonvesicular lipid trafficking between the ER and mitochondria. Mdm12 is required for the interaction of the ER-resident membrane protein mmm1 and the outer mitochondrial membrane-resident beta-barrel protein mdm10. The mdm12-mmm1 subcomplex functions in the major beta-barrel assembly pathway that is responsible for biogenesis of all mitochondrial outer membrane beta-barrel proteins, and acts in a late step after the SAM complex. The mdm10-mdm12-mmm1 subcomplex further acts in the TOM40-specific pathway after the action of the mdm12-mmm1 complex. Essential for establishing and maintaining the structure of mitochondria and maintenance of mtDNA nucleoids. This Neosartorya fischeri (strain ATCC 1020 / DSM 3700 / CBS 544.65 / FGSC A1164 / JCM 1740 / NRRL 181 / WB 181) (Aspergillus fischerianus) protein is Mitochondrial distribution and morphology protein 12.